We begin with the raw amino-acid sequence, 354 residues long: MHHPLPPDDTLYDQVRPILWTGHFLKLLDQRKLPFVVEYVECHSSEDVTQAIRTLIVRGAPAIGIVAGWGAVLAAREIEAVDGIEALCKLEPALQRLHAARPTAVNLAWVLARMRRTLSAAHADWRQVMECEAESIAREDLTANRCMGAYGAALIPIGSGVLTHCNTGSLATAGFGTALGVIRDGIAQGRIARVFVGETRPWLQGARLTVWELQQDGIDATLIADSAAAHLMKSGQVQWVIVGADRICANGDTANKIGTYQLAITARHHGVKFMVVASAATVDMDTVAGEAIEIEQRDPEELLGVSGVRTVAEGIAAWNPVFDVTPGALIDAIVTERGVIQSPDAAQMRATFGN.

Substrate contacts are provided by residues 58-60 (RGA), Arg101, and Gln204. Catalysis depends on Asp245, which acts as the Proton donor. Position 255-256 (255-256 (NK)) interacts with substrate.

The protein belongs to the eIF-2B alpha/beta/delta subunits family. MtnA subfamily.

It catalyses the reaction 5-(methylsulfanyl)-alpha-D-ribose 1-phosphate = 5-(methylsulfanyl)-D-ribulose 1-phosphate. It functions in the pathway amino-acid biosynthesis; L-methionine biosynthesis via salvage pathway; L-methionine from S-methyl-5-thio-alpha-D-ribose 1-phosphate: step 1/6. Functionally, catalyzes the interconversion of methylthioribose-1-phosphate (MTR-1-P) into methylthioribulose-1-phosphate (MTRu-1-P). The chain is Methylthioribose-1-phosphate isomerase from Xylella fastidiosa (strain M23).